The chain runs to 666 residues: Galactocerebrosidase (666 aa).

The N-terminal stretch at 1–22 is a signal peptide; that stretch reads MIYKLYFAIALCFSLCFDLCIA. A substrate-binding site is contributed by T91. The N-linked (GlcNAc...) asparagine glycan is linked to N125. Substrate is bound by residues W133 and N179. E180 serves as the catalytic Proton donor/acceptor. Residue E256 is the Nucleophile of the active site. C269 and C376 are disulfide-bonded. N-linked (GlcNAc...) asparagine glycosylation is present at N361. Residue R378 coordinates substrate. N-linked (GlcNAc...) asparagine glycosylation is found at N385, N390, N500, and N540.

Belongs to the glycosyl hydrolase 59 family.

The protein resides in the lysosome. The catalysed reaction is a beta-D-galactosyl-(1&lt;-&gt;1')-N-acylsphing-4-enine + H2O = an N-acylsphing-4-enine + D-galactose. It catalyses the reaction beta-D-galactosyl-(1&lt;-&gt;1)-sphing-4-enine + H2O = sphing-4-enine + D-galactose. The enzyme catalyses a D-galactosylceramide + H2O = an N-acyl-sphingoid base + D-galactose. Its function is as follows. Hydrolyzes the galactose ester bonds of glycolipids such as galactosylceramide and galactosylsphingosine. The protein is Galactocerebrosidase of Salmo salar (Atlantic salmon).